A 218-amino-acid chain; its full sequence is Large ribosomal subunit protein uL3 (218 aa).

It belongs to the universal ribosomal protein uL3 family. As to quaternary structure, part of the 50S ribosomal subunit. Forms a cluster with proteins L14 and L19.

One of the primary rRNA binding proteins, it binds directly near the 3'-end of the 23S rRNA, where it nucleates assembly of the 50S subunit. The sequence is that of Large ribosomal subunit protein uL3 from Mycolicibacterium gilvum (strain PYR-GCK) (Mycobacterium gilvum (strain PYR-GCK)).